A 155-amino-acid chain; its full sequence is Large ribosomal subunit protein uL13 (155 aa).

This sequence belongs to the universal ribosomal protein uL13 family. In terms of assembly, part of the 50S ribosomal subunit.

This protein is one of the early assembly proteins of the 50S ribosomal subunit, although it is not seen to bind rRNA by itself. It is important during the early stages of 50S assembly. In Aeropyrum pernix (strain ATCC 700893 / DSM 11879 / JCM 9820 / NBRC 100138 / K1), this protein is Large ribosomal subunit protein uL13.